Reading from the N-terminus, the 158-residue chain is Small ribosomal subunit protein uS7 (158 aa).

The protein belongs to the universal ribosomal protein uS7 family. As to quaternary structure, part of the 30S ribosomal subunit. Contacts proteins S9 and S11.

One of the primary rRNA binding proteins, it binds directly to 16S rRNA where it nucleates assembly of the head domain of the 30S subunit. Is located at the subunit interface close to the decoding center, probably blocks exit of the E-site tRNA. This chain is Small ribosomal subunit protein uS7, found in Acidiphilium cryptum (strain JF-5).